A 392-amino-acid polypeptide reads, in one-letter code: Putative glutamate--cysteine ligase 2 (392 aa).

The tract at residues Ala347–Val367 is disordered.

The protein belongs to the glutamate--cysteine ligase type 2 family. YbdK subfamily.

The enzyme catalyses L-cysteine + L-glutamate + ATP = gamma-L-glutamyl-L-cysteine + ADP + phosphate + H(+). Its function is as follows. ATP-dependent carboxylate-amine ligase which exhibits weak glutamate--cysteine ligase activity. The protein is Putative glutamate--cysteine ligase 2 of Corynebacterium jeikeium (strain K411).